Consider the following 239-residue polypeptide: Ribonuclease PH (239 aa).

Phosphate contacts are provided by residues R87 and 125-127 (GTR).

This sequence belongs to the RNase PH family. As to quaternary structure, homohexameric ring arranged as a trimer of dimers.

The enzyme catalyses tRNA(n+1) + phosphate = tRNA(n) + a ribonucleoside 5'-diphosphate. Its function is as follows. Phosphorolytic 3'-5' exoribonuclease that plays an important role in tRNA 3'-end maturation. Removes nucleotide residues following the 3'-CCA terminus of tRNAs; can also add nucleotides to the ends of RNA molecules by using nucleoside diphosphates as substrates, but this may not be physiologically important. Probably plays a role in initiation of 16S rRNA degradation (leading to ribosome degradation) during starvation. The protein is Ribonuclease PH of Cyanothece sp. (strain PCC 7425 / ATCC 29141).